Reading from the N-terminus, the 344-residue chain is MMSLTITRPDDWHVHLRDGIQLNDTVRDISRYMGRAIIMPNLMPPATCTDTALAYRERIVAAKTPDNQFEPLMVLYLTDNTSPDEIRKAKATGLIHAAKLYPAGATTNSDSGVTSISNLYPVLEAMAEVGMLLLVHGEVTDSSIDIFDREKVFLETILAQVVTDFPKLKIVLEHITTSDAVEFVNKAPDNVAATITAHHLLYNRNHMLAGGIRPHFYCLPILKRNTHQQALIAAATSGSKKFFLGTDSAPHLKDKKEASCGCAGSYTAHAAIELYAEAFEAAGALDKLEAFASFYGADFYGLPRNTDTITLEKTPWQVPDSYPLANDRVVPIRAGEMLDWQVIS.

Positions 13 and 15 each coordinate Zn(2+). Residues 15 to 17 (HLR) and asparagine 41 each bind substrate. Zn(2+)-binding residues include lysine 99, histidine 136, and histidine 174. An N6-carboxylysine modification is found at lysine 99. Residue histidine 136 coordinates substrate. Leucine 219 serves as a coordination point for substrate. Aspartate 247 lines the Zn(2+) pocket. The active site involves aspartate 247. Positions 251 and 263 each coordinate substrate.

This sequence belongs to the metallo-dependent hydrolases superfamily. DHOase family. Class II DHOase subfamily. As to quaternary structure, homodimer. It depends on Zn(2+) as a cofactor.

It carries out the reaction (S)-dihydroorotate + H2O = N-carbamoyl-L-aspartate + H(+). It functions in the pathway pyrimidine metabolism; UMP biosynthesis via de novo pathway; (S)-dihydroorotate from bicarbonate: step 3/3. Catalyzes the reversible cyclization of carbamoyl aspartate to dihydroorotate. This Shewanella denitrificans (strain OS217 / ATCC BAA-1090 / DSM 15013) protein is Dihydroorotase.